The primary structure comprises 3268 residues: E3 ubiquitin-protein ligase TOM1 (3268 aa).

S1890 carries the post-translational modification Phosphoserine. Disordered stretches follow at residues 1941-2023 (VFSD…EDDA) and 2038-2083 (GYDV…MGDS). Residues 1942 to 1955 (FSDEDDDMGEEDAD) are compositionally biased toward acidic residues. The segment covering 1967–1976 (SSEMQSSTAD) has biased composition (polar residues). 3 stretches are compositionally biased toward acidic residues: residues 1978–1988 (TDVDYEVDDAD), 2042–2053 (DLSDYDVDESDW), and 2063–2074 (SDEDSESSEDEP). Phosphothreonine is present on T2096. Phosphoserine is present on residues S2119, S2376, S2406, and S2418. The segment covering 2416-2426 (DVSNNDEEVEN) has biased composition (acidic residues). Positions 2416–2443 (DVSNNDEEVENGLDHGNSNDRNNADPEK) are disordered. Positions 2932–3268 (TNDEIKNSKL…NEGHEGFGLA (337 aa)) constitute an HECT domain. The Glycyl thioester intermediate role is filled by C3235.

Belongs to the UPL family. TOM1/PTR1 subfamily. Interacts with the ADA3/NGG1 subunit of the SAGA complex. Interacts with KRR1.

Its subcellular location is the nucleus. It is found in the nucleolus. It catalyses the reaction S-ubiquitinyl-[E2 ubiquitin-conjugating enzyme]-L-cysteine + [acceptor protein]-L-lysine = [E2 ubiquitin-conjugating enzyme]-L-cysteine + N(6)-ubiquitinyl-[acceptor protein]-L-lysine.. The protein operates within protein modification; protein ubiquitination. Probable ubiquitin ligase protein involved in many cellular processes, such as transcription regulation, maintenance of nuclear structure, cell cycle, mRNA export and rRNA maturation. E3 ubiquitin ligase proteins mediate ubiquitination and subsequent proteasomal degradation of target proteins. Involved in transcription regulation by interacting, and probably mediating, ubiquitination of some subunit of the SAGA complex. Required for SPT7 ubiquitination. Participates in mRNA export from the nucleus by regulating the transport of hnRNP proteins. Required for the shuttling of hnRNP protein NAB2, probably by mediating ubiquitination of a protein associated with NAB2. Also required for full induction of the general stress and heat-shock responses. Involved in 18S rRNA maturation by affecting several early steps in the rRNA processing pathway. In Saccharomyces cerevisiae (strain ATCC 204508 / S288c) (Baker's yeast), this protein is E3 ubiquitin-protein ligase TOM1 (TOM1).